A 181-amino-acid polypeptide reads, in one-letter code: Adenine phosphoribosyltransferase (181 aa).

Belongs to the purine/pyrimidine phosphoribosyltransferase family. Homodimer.

The protein resides in the cytoplasm. The catalysed reaction is AMP + diphosphate = 5-phospho-alpha-D-ribose 1-diphosphate + adenine. It participates in purine metabolism; AMP biosynthesis via salvage pathway; AMP from adenine: step 1/1. Its function is as follows. Catalyzes a salvage reaction resulting in the formation of AMP, that is energically less costly than de novo synthesis. This chain is Adenine phosphoribosyltransferase, found in Methylobacterium sp. (strain 4-46).